Reading from the N-terminus, the 376-residue chain is Coatomer subunit delta-4 (376 aa).

Residues 65 to 92 (LNTDTDTFTSRPKGRTSGGTTGAGKGIG) form a disordered region. Over residues 80–92 (TSGGTTGAGKGIG) the composition is skewed to gly residues. The region spanning 134–376 (SDPVTVAVEE…RLVADNYQVV (243 aa)) is the MHD domain.

It belongs to the adaptor complexes medium subunit family. Delta-COP subfamily. In terms of assembly, oligomeric complex that consists of at least the alpha, beta, beta', gamma, delta, epsilon and zeta subunits.

It is found in the cytoplasm. The protein localises to the golgi apparatus membrane. The protein resides in the cytoplasmic vesicle. It localises to the COPI-coated vesicle membrane. Its function is as follows. The coatomer is a cytosolic protein complex that binds to dilysine motifs and reversibly associates with Golgi non-clathrin-coated vesicles, which further mediate biosynthetic protein transport from the ER, via the Golgi up to the trans Golgi network. Coatomer complex is required for budding from Golgi membranes, and is essential for the retrograde Golgi-to-ER transport of dilysine-tagged proteins. The sequence is that of Coatomer subunit delta-4 from Oryza sativa subsp. japonica (Rice).